We begin with the raw amino-acid sequence, 416 residues long: WD repeat-containing protein JIP5 (416 aa).

WD repeat units lie at residues 9–48 (PLSS…ENGK), 62–101 (RHKG…VEWK), and 112–151 (GFQV…TEVS). The disordered stretch occupies residues 149–183 (EVSARPQQTHHPHDDYVSSLTPLPPSETSTSGYSK). Residues 166 to 179 (SSLTPLPPSETSTS) are compositionally biased toward low complexity. 3 WD repeats span residues 214–255 (ISSS…DQDE), 264–308 (DGGE…ISEL), and 309–348 (SHDD…EEGN). 2 stretches are compositionally biased toward acidic residues: residues 343–359 (SDEE…DIEN) and 374–383 (SDEEEDSDDD). Residues 343–416 (SDEEGNDDES…VHVMAFKGLD (74 aa)) form a disordered region. Basic residues predominate over residues 389–400 (KGKRKKRKRGKG).

It belongs to the WD repeat WDR55 family.

It localises to the nucleus. Its subcellular location is the nucleolus. This Coccidioides immitis (strain RS) (Valley fever fungus) protein is WD repeat-containing protein JIP5 (JIP5).